A 195-amino-acid polypeptide reads, in one-letter code: Adenylate kinase (195 aa).

10–15 (GAGKGT) provides a ligand contact to ATP. The NMP stretch occupies residues 30–59 (STGDMLRAAVAAGTPVGLKAKAVMDAGGLV). AMP contacts are provided by residues T31, R36, 57–59 (GLV), 85–88 (GFPR), and Q92. Residues 126–143 (NRAAEAQAKGEAVRKDDD) are LID. Residue R127 participates in ATP binding. R150 is a binding site for AMP. A178 provides a ligand contact to ATP.

The protein belongs to the adenylate kinase family. In terms of assembly, monomer.

Its subcellular location is the cytoplasm. It catalyses the reaction AMP + ATP = 2 ADP. Its pathway is purine metabolism; AMP biosynthesis via salvage pathway; AMP from ADP: step 1/1. In terms of biological role, catalyzes the reversible transfer of the terminal phosphate group between ATP and AMP. Plays an important role in cellular energy homeostasis and in adenine nucleotide metabolism. The chain is Adenylate kinase from Xanthobacter autotrophicus (strain ATCC BAA-1158 / Py2).